We begin with the raw amino-acid sequence, 232 residues long: PsbP domain-containing protein 2, chloroplastic (232 aa).

A chloroplast-targeting transit peptide spans 1-34; that stretch reads MWSQSFLGSAPKLCLFSSSLPPFSHHKIHKFFCF. A thylakoid-targeting transit peptide spans 35 to 71; it reads AQNPSSTVSINLSKRHLNLSILTLFFNGFLLDNKAKS.

It belongs to the PsbP family.

The protein resides in the plastid. Its subcellular location is the chloroplast thylakoid lumen. The sequence is that of PsbP domain-containing protein 2, chloroplastic (PPD2) from Arabidopsis thaliana (Mouse-ear cress).